Reading from the N-terminus, the 490-residue chain is GTPase Der (490 aa).

EngA-type G domains are found at residues M1–V165 and L227–T400. Residues G7 to S14, D54 to V58, N117 to D120, G233 to S240, D280 to L284, and N345 to D348 contribute to the GTP site. The KH-like domain occupies T401 to P485.

It belongs to the TRAFAC class TrmE-Era-EngA-EngB-Septin-like GTPase superfamily. EngA (Der) GTPase family. In terms of assembly, associates with the 50S ribosomal subunit.

In terms of biological role, GTPase that plays an essential role in the late steps of ribosome biogenesis. In Chlamydia trachomatis serovar L2b (strain UCH-1/proctitis), this protein is GTPase Der.